Here is a 425-residue protein sequence, read N- to C-terminus: MREPDFLNHFLKKGYFKKHAKAVLALSGGLDSMFLFKVLSTYQKELEIELILAHVNHKQRIESDWEEKELRKLAAEAELPIYISNFSGEFSEARARNFRYDFFQEVMKKTGATALVTAHHADDQVETILMRLIRGTRLRYLSGIKEKQVVGEIEIIRPFLHFQKKDFPSIFHFEDTSNQENHYFRNRIRNSYLPELEKENPRFRDAILGIGNEILDYDLAIAELSNNINVENLQQLFSYSESTQRVLLQTYLNRFPDLNLTKAQFAEVQQILKSKSQYRHPIKNGYELIKEYQQFQICKISPQADEEEDELVLHYQNQVAYQGYLFSFGLPLEGELIQQIPVSRETSIHIRHRKTGDVLIQNGHRKKLRRLFIDLKIPMEKRNSALIIEQFGEIVSILGIATNNLSKKTKNDIMNTVLYIEKIDR.

Position 27–32 (27–32) interacts with ATP; sequence SGGLDS.

This sequence belongs to the tRNA(Ile)-lysidine synthase family.

The protein localises to the cytoplasm. The catalysed reaction is cytidine(34) in tRNA(Ile2) + L-lysine + ATP = lysidine(34) in tRNA(Ile2) + AMP + diphosphate + H(+). Functionally, ligates lysine onto the cytidine present at position 34 of the AUA codon-specific tRNA(Ile) that contains the anticodon CAU, in an ATP-dependent manner. Cytidine is converted to lysidine, thus changing the amino acid specificity of the tRNA from methionine to isoleucine. In Streptococcus pneumoniae (strain JJA), this protein is tRNA(Ile)-lysidine synthase.